The primary structure comprises 394 residues: Endothelial cell-selective adhesion molecule (394 aa).

The first 29 residues, 1-29 (MILPARTPETSLLRVLFLGLSTLAAFSLA), serve as a signal peptide directing secretion. Residues 30–251 (QMELHVPPGL…LDVMTGSKAA (222 aa)) are Extracellular-facing. Positions 37-146 (PGLNKLEAVE…DGKNIGHSIK (110 aa)) constitute an Ig-like V-type domain. Residues asparagine 111, asparagine 172, asparagine 216, and asparagine 239 are each glycosylated (N-linked (GlcNAc...) asparagine). Residues 156–243 (PAPPSCSFQG…GFAQCNVTLD (88 aa)) enclose the Ig-like C2-type domain. Cysteine 177 and cysteine 227 form a disulfide bridge. The chain crosses the membrane as a helical span at residues 252-272 (VVAGAVVGTFVGLVLIAGLVL). Residues 273-394 (LYQRRSKTLE…PAQSQAGSLV (122 aa)) lie on the Cytoplasmic side of the membrane. The disordered stretch occupies residues 300–372 (WTKGSDTISK…SLTPGGVSSS (73 aa)). 2 stretches are compositionally biased toward polar residues: residues 303–318 (GSDT…SVTS) and 335–347 (FTPT…QALS). A Phosphoserine modification is found at serine 304. Threonine 336 and threonine 338 each carry phosphothreonine. 3 positions are modified to phosphoserine: serine 340, serine 343, and serine 348.

As to quaternary structure, interacts with MAGI1.

The protein resides in the cell junction. The protein localises to the adherens junction. Its subcellular location is the tight junction. It localises to the cell membrane. Its function is as follows. Can mediate aggregation most likely through a homophilic molecular interaction. In Rattus norvegicus (Rat), this protein is Endothelial cell-selective adhesion molecule (Esam).